The following is a 443-amino-acid chain: Xaa-Pro dipeptidase (443 aa).

5 residues coordinate Mn(2+): aspartate 246, aspartate 257, histidine 339, glutamate 384, and glutamate 423.

It belongs to the peptidase M24B family. Bacterial-type prolidase subfamily. Requires Mn(2+) as cofactor.

The enzyme catalyses Xaa-L-Pro dipeptide + H2O = an L-alpha-amino acid + L-proline. Splits dipeptides with a prolyl residue in the C-terminal position. The sequence is that of Xaa-Pro dipeptidase from Shigella flexneri.